Reading from the N-terminus, the 207-residue chain is Putative 3-methyladenine DNA glycosylase (207 aa).

Belongs to the DNA glycosylase MPG family.

This Koribacter versatilis (strain Ellin345) protein is Putative 3-methyladenine DNA glycosylase.